The sequence spans 377 residues: Sodium-dependent organic anion transporter (377 aa).

Over 1–29 (MRANCSSSSACPANSSEEELPVGLEVHGN) the chain is Extracellular. Residue N4 is glycosylated (N-linked (GlcNAc...) asparagine). A helical membrane pass occupies residues 30–50 (LELVFTVVSTVMMGLLMFSLG). At 51 to 67 (CSVEIRKLWSHIRRPWG) the chain is on the cytoplasmic side. A helical membrane pass occupies residues 68–88 (IAVGLLCQFGLMPFTAYLLAI). Over 89–97 (SFSLKPVQA) the chain is Extracellular. A helical membrane pass occupies residues 98–118 (IAVLIMGCCPGGTISNIFTFW). Residues 119-133 (VDGDMDLSISMTTCS) lie on the Cytoplasmic side of the membrane. Residues 134-154 (TVAALGMMPLCIYLYTWSWSL) traverse the membrane as a helical segment. The Extracellular segment spans residues 155–159 (QQNLT). An N-linked (GlcNAc...) asparagine glycan is attached at N157. Residues 160 to 180 (IPYQNIGITLVCLTIPVAFGV) form a helical membrane-spanning segment. Over 181–195 (YVNYRWPKQSKIILK) the chain is Cytoplasmic. The helical transmembrane segment at 196-216 (IGAVVGGVLLLVVAVAGVVLA) threads the bilayer. The Extracellular segment spans residues 217-226 (KGSWNSDITL). Residues 227 to 247 (LTISFIFPLIGHVTGFLLALF) traverse the membrane as a helical segment. Topologically, residues 248 to 266 (THQSWQRCRTISLETGAQN) are cytoplasmic. The chain crosses the membrane as a helical span at residues 267 to 285 (IQMCITMLQLSFTAEHLVQ). The Extracellular segment spans residues 286–290 (MLSFP). Residues 291 to 311 (LAYGLFQLIDGFLIVAAYQTY) traverse the membrane as a helical segment. Residues 312-377 (KRRLKNKHGK…EPVGHITSCE (66 aa)) lie on the Cytoplasmic side of the membrane.

This sequence belongs to the bile acid:sodium symporter (BASS) (TC 2.A.28) family. Post-translationally, glycosylated. Highly expressed in testis, placenta and pancreas. Moderately expressed in heart, lung and mammary gland. Weakly expressed in brain, colon, kidney, liver, ovary, prostate, small intestine, spleen and thymus.

It localises to the membrane. It catalyses the reaction estrone 3-sulfate(out) + 2 Na(+)(out) = estrone 3-sulfate(in) + 2 Na(+)(in). The catalysed reaction is 17beta-estradiol 3-sulfate(out) + 2 Na(+)(out) = 17beta-estradiol 3-sulfate(in) + 2 Na(+)(in). It carries out the reaction dehydroepiandrosterone 3-sulfate(out) + 2 Na(+)(out) = dehydroepiandrosterone 3-sulfate(in) + 2 Na(+)(in). The enzyme catalyses androst-5-ene-diol 3-sulfate(out) + 2 Na(+)(out) = androst-5-ene-diol 3-sulfate(in) + 2 Na(+)(in). It catalyses the reaction pregnenolone sulfate(out) + 2 Na(+)(out) = pregnenolone sulfate(in) + 2 Na(+)(in). The catalysed reaction is taurolithocholate 3-sulfate(out) + 2 Na(+)(out) = taurolithocholate 3-sulfate(in) + 2 Na(+)(in). It carries out the reaction androsterone 3alpha-sulfate(out) + 2 Na(+)(out) = androsterone 3alpha-sulfate(in) + 2 Na(+)(in). The enzyme catalyses 5alpha-dihydrotestosterone sulfate(out) + 2 Na(+)(out) = 5alpha-dihydrotestosterone sulfate(in) + 2 Na(+)(in). It catalyses the reaction 17beta-estradiol 17-sulfate(out) + 2 Na(+)(out) = 17beta-estradiol 17-sulfate(in) + 2 Na(+)(in). The catalysed reaction is 17alpha-hydroxypregnenolone 3-sulfate(out) + 2 Na(+)(out) = 17alpha-hydroxypregnenolone 3-sulfate(in) + 2 Na(+)(in). It carries out the reaction epiandrosterone 3-sulfate(out) + 2 Na(+)(out) = epiandrosterone 3-sulfate(in) + 2 Na(+)(in). The enzyme catalyses epitestosterone 17-sulfate(out) + 2 Na(+)(out) = epitestosterone 17-sulfate(in) + 2 Na(+)(in). It catalyses the reaction testosterone 17-sulfate(out) + 2 Na(+)(out) = testosterone 17-sulfate(in) + 2 Na(+)(in). The catalysed reaction is 16alpha-hydroxydehydroepiandrosterone 3-sulfate(out) + 2 Na(+)(out) = 16alpha-hydroxydehydroepiandrosterone 3-sulfate(in) + 2 Na(+)(in). Its function is as follows. Transports sulfoconjugated steroid hormones from the extracellular compartment into the cytosol in a sodium-dependent manner without hydrolysis. Steroid sulfate hormones are commonly considered to be biologically inactive metabolites, that may be activated by steroid sulfatases into free steroids. May play an important role by delivering sulfoconjugated steroids to specific target cells in reproductive organs. May play a role transporting the estriol precursor 16alpha-hydroxydehydroepiandrosterone 3-sulfate (16a-OH-DHEAS) at the fetal blood vessel endothelium. Can also transport other sulfoconjugated molecules such as taurolithocholic acid-3-sulfate and sulfoconjugated pyrenes. The sequence is that of Sodium-dependent organic anion transporter (SLC10A6) from Homo sapiens (Human).